We begin with the raw amino-acid sequence, 372 residues long: Formylglycine-generating enzyme (372 aa).

Positions 1–31 (MAAPAREPALRCCIRLARVFLLLVLACEVAG) are cleaved as a signal peptide. A disulfide bridge links Cys-48 with Cys-50. The tract at residues 61-80 (SSAAAQRYSREANAPGLTSG) is disordered. Glu-128 contributes to the Ca(2+) binding site. Residue Asn-139 is glycosylated (N-linked (GlcNAc...) asparagine). 2 disulfides stabilise this stretch: Cys-216–Cys-363 and Cys-233–Cys-344. Residues Asn-257, Ile-258, Asp-271, Phe-273, Asn-291, Gly-294, and Glu-298 each coordinate Ca(2+). Residues Cys-334 and Cys-339 each coordinate Cu(2+). Positions 339–358 (CYRYRCAARSQNTPDSSASN) are interaction with sulfatases.

This sequence belongs to the sulfatase-modifying factor family. Monomer, homodimer and heterodimer with SUMF2. Requires Cu(2+) as cofactor. Post-translationally, N-glycosylated. Contains high-mannose-type oligosaccharides.

It is found in the endoplasmic reticulum lumen. It catalyses the reaction L-cysteinyl-[sulfatase] + 2 a thiol + O2 = an organic disulfide + 3-oxo-L-alanyl-[sulfatase] + hydrogen sulfide + H2O + H(+). It functions in the pathway protein modification; sulfatase oxidation. Oxidase that catalyzes the conversion of cysteine to 3-oxoalanine on target proteins, using molecular oxygen and an unidentified reducing agent. 3-oxoalanine modification, which is also named formylglycine (fGly), occurs in the maturation of arylsulfatases and some alkaline phosphatases that use the hydrated form of 3-oxoalanine as a catalytic nucleophile. Known substrates include GALNS, ARSA, STS and ARSE. The sequence is that of Formylglycine-generating enzyme from Mus musculus (Mouse).